We begin with the raw amino-acid sequence, 523 residues long: Cilia- and flagella-associated protein 157 (523 aa).

Positions 1–31 are disordered; sequence MAPKKKPNKGGKEMQGKKIGGKKDASGTKTP. Residues 10 to 26 show a composition bias toward basic and acidic residues; the sequence is GGKEMQGKKIGGKKDAS. Position 30 is a phosphothreonine (Thr30). 3 coiled-coil regions span residues 32 to 191, 248 to 274, and 302 to 371; these read ELAM…LEKK, VQLLQENEQLKGTQNKLCQQLEMLENT, and GTEE…VLIQ. Residues 419–440 form a disordered region; the sequence is QPDMGSHQDKQPQGLSKESQRI. Residues 429 to 440 show a composition bias toward polar residues; it reads QPQGLSKESQRI.

Belongs to the CFAP157 family. Interacts with TUBB and TUBA4A. Interacts with CEP350. In terms of tissue distribution, specifically expressed in tissues containing motile cilia.

It is found in the cytoplasm. The protein localises to the cytoskeleton. Its subcellular location is the cilium basal body. In terms of biological role, specifically required during spermatogenesis for flagellum morphogenesis and sperm motility. May be required to suppress the formation of supernumerary axonemes and ensure a correct ultrastructure. This is Cilia- and flagella-associated protein 157 from Mus musculus (Mouse).